Reading from the N-terminus, the 297-residue chain is NADH-ubiquinone oxidoreductase chain 1 (297 aa).

Helical transmembrane passes span 1–21 (MKSL…TLAE), 34–54 (PNHV…KLIL), 66–86 (WLFV…WLVI), 99–119 (LSIL…IYTG), 139–159 (VSYE…GATL), 170–190 (GTVL…AALA), 206–228 (LVAG…GEYA), 235–257 (TVLN…IWIR), and 277–297 (LPFL…LDLF).

It belongs to the complex I subunit 1 family.

It localises to the mitochondrion inner membrane. It catalyses the reaction a ubiquinone + NADH + 5 H(+)(in) = a ubiquinol + NAD(+) + 4 H(+)(out). In terms of biological role, core subunit of the mitochondrial membrane respiratory chain NADH dehydrogenase (Complex I) that is believed to belong to the minimal assembly required for catalysis. Complex I functions in the transfer of electrons from NADH to the respiratory chain. The immediate electron acceptor for the enzyme is believed to be ubiquinone. This is NADH-ubiquinone oxidoreductase chain 1 from Hyaloraphidium curvatum (Lower fungus).